Consider the following 308-residue polypeptide: Testis-specific Y-encoded protein 1 (308 aa).

It belongs to the nucleosome assembly protein (NAP) family. In terms of processing, phosphorylated. As to expression, specifically expressed in testicular tissues. Isoform 1 and isoform 2 are expressed in spermatogonia and spermatocytes. Found in early testicular carcinoma in situ, spermatogonial cells in testicular tissues of 46,X,Y female and in prostate cancer cell lines.

It localises to the cytoplasm. The protein localises to the nucleus. Functionally, may be involved in sperm differentiation and proliferation. The polypeptide is Testis-specific Y-encoded protein 1 (TSPY1) (Homo sapiens (Human)).